A 331-amino-acid chain; its full sequence is MATSLQAAATFLQPAKIAASPSRNVHLRSNQTVGKSFGLDSSQARLTCSLHSDLKDFAGKCSDAAKIAGFALATSALVVSGAGAEGAPKRLTYDEIQSKTYMEVKGTGTANQCPTIDGGSETFSFKAGKYTGKKFCFEPTSFTVKADSVSKNAPPDFQNTKLMTRLTYTLDEIEGPFEVGSDGSVKFKEEDGIDYAAVTVQLPGGERVPFLFTVKQLEASGKPESFSGKFLVPSYRGSSFLDPKGRGGSTGYDNAVALPAGGRGDEEELSKENVKNTAASVGEITLKITKSKPETGEVIGVFESLQPSDTDLGAKVPKDVKIQGVWYGQIE.

A chloroplast-targeting transit peptide spans 1-57; that stretch reads MATSLQAAATFLQPAKIAASPSRNVHLRSNQTVGKSFGLDSSQARLTCSLHSDLKDF. The N-terminal 27 residues, 58 to 84, are a transit peptide targeting the thylakoid; that stretch reads AGKCSDAAKIAGFALATSALVVSGAGA.

Belongs to the PsbO family.

It is found in the plastid. Its subcellular location is the chloroplast thylakoid membrane. Stabilizes the manganese cluster which is the primary site of water splitting. Regulates dephosphorylation and turnover of the PSII reaction center D1 protein. The polypeptide is Oxygen-evolving enhancer protein 1-2, chloroplastic (PSBO2) (Arabidopsis thaliana (Mouse-ear cress)).